The sequence spans 411 residues: 2-oxoglutarate-dependent dioxygenase AOP3 (411 aa).

In terms of domain architecture, Fe2OG dioxygenase spans 259–356 (GNASVGAKEA…RYAAALFSNP (98 aa)). H279, D281, and H336 together coordinate Fe cation. R347 contributes to the 2-oxoglutarate binding site.

The protein belongs to the iron/ascorbate-dependent oxidoreductase family. Requires Fe(2+) as cofactor. As to expression, not expressed.

2-oxoglutarate-dependent dioxygenase involved in glucosinolates biosynthesis. Catalyzes the conversion of methylsulfinylalkyl glucosinolates to hydroxyalkyl glucosinolates. This is 2-oxoglutarate-dependent dioxygenase AOP3 (AOP3) from Arabidopsis thaliana (Mouse-ear cress).